The chain runs to 90 residues: Darcynin 1 (90 aa).

It belongs to the darcynin family.

The sequence is that of Darcynin 1 from Acinetobacter baumannii (strain ATCC 17978 / DSM 105126 / CIP 53.77 / LMG 1025 / NCDC KC755 / 5377).